The chain runs to 366 residues: DNA repair protein RAD51 homolog 3 (366 aa).

Residues 1-117 are required for Holliday junction resolution activity; it reads MQRELVSFPL…LMKTTEVCGV (117 aa). Residue Ser11 is modified to Phosphoserine. The segment at 70-127 is interaction with RAD51B, RAD51D and XRCC3; the sequence is SVAGKKYTALELLEQEHTQGFIITFCSALDNILGGGIPLMKTTEVCGVPGVGKTQLCM. 116–123 is a binding site for ATP; the sequence is GVPGVGKT. The interval 338 to 366 is disordered; that stretch reads RDAAVTASSSQTEGSSNLRKRSREPEEGC. Residues 343 to 354 are compositionally biased toward polar residues; the sequence is TASSSQTEGSSN. A Nuclear localization signal motif is present at residues 356 to 360; the sequence is RKRSR.

This sequence belongs to the RecA family. RAD51 subfamily. Part of the RAD51 paralog protein complexes BCDX2 and CX3; the complexes have a ring-like structure arranged into a flat disc around a central channel. The BCDX2 complex consits of RAD51B, RAD51C, RAD51D and XRCC2; the CX3 complex consists of RAD51C and XRCC3. The BCDX2 subcomplex RAD51B:RAD51C interacts with RAD51. Interacts with SWSAP1; involved in homologous recombination repair. Interacts directly with PALB2 which may serve as a scaffold for a HR complex containing PALB2, BRCA2, RAD51C, RAD51 and XRCC3. Interacts with HELQ.

Its subcellular location is the nucleus. It is found in the cytoplasm. The protein resides in the perinuclear region. It localises to the mitochondrion. In terms of biological role, essential for the homologous recombination (HR) pathway of DNA repair. Involved in the homologous recombination repair (HRR) pathway of double-stranded DNA breaks arising during DNA replication or induced by DNA-damaging agents. Part of the RAD51 paralog protein complexes BCDX2 and CX3 which act at different stages of the BRCA1-BRCA2-dependent HR pathway. Upon DNA damage, BCDX2 seems to act downstream of BRCA2 recruitment and upstream of RAD51 recruitment; CX3 seems to act downstream of RAD51 recruitment; both complexes bind predominantly to the intersection of the four duplex arms of the Holliday junction (HJ) and to junction of replication forks. The BCDX2 complex was originally reported to bind single-stranded DNA, single-stranded gaps in duplex DNA and specifically to nicks in duplex DNA. The BCDX2 subcomplex RAD51B:RAD51C exhibits single-stranded DNA-dependent ATPase activity suggesting an involvement in early stages of the HR pathway. Involved in RAD51 foci formation in response to DNA damage suggesting an involvement in early stages of HR probably in the invasion step. Has an early function in DNA repair in facilitating phosphorylation of the checkpoint kinase CHEK2 and thereby transduction of the damage signal, leading to cell cycle arrest and HR activation. Participates in branch migration and HJ resolution and thus is important for processing HR intermediates late in the DNA repair process; the function may be linked to the CX3 complex. Part of a PALB2-scaffolded HR complex containing BRCA2 and which is thought to play a role in DNA repair by HR. Protects RAD51 from ubiquitin-mediated degradation that is enhanced following DNA damage. Plays a role in regulating mitochondrial DNA copy number under conditions of oxidative stress in the presence of RAD51 and XRCC3. Contributes to DNA cross-link resistance, sister chromatid cohesion and genomic stability. Involved in maintaining centrosome number in mitosis. In Cricetulus griseus (Chinese hamster), this protein is DNA repair protein RAD51 homolog 3 (RAD51C).